A 285-amino-acid polypeptide reads, in one-letter code: Extracellular metalloprotease NCU07200 (285 aa).

Positions 1-18 (MQIKSFLLAAAAAPAALG) are cleaved as a signal peptide. Position 197 (H197) interacts with Zn(2+). E198 is a catalytic residue. Residue H201 coordinates Zn(2+). A disulfide bridge links C233 with C260. N282 carries an N-linked (GlcNAc...) asparagine glycan.

The protein belongs to the peptidase M43B family.

The protein resides in the secreted. Secreted metalloproteinase that allows assimilation of proteinaceous substrates. This is Extracellular metalloprotease NCU07200 from Neurospora crassa (strain ATCC 24698 / 74-OR23-1A / CBS 708.71 / DSM 1257 / FGSC 987).